Reading from the N-terminus, the 71-residue chain is Small ribosomal subunit protein bS21 (71 aa).

The protein belongs to the bacterial ribosomal protein bS21 family.

In Acidithiobacillus ferrooxidans (strain ATCC 23270 / DSM 14882 / CIP 104768 / NCIMB 8455) (Ferrobacillus ferrooxidans (strain ATCC 23270)), this protein is Small ribosomal subunit protein bS21.